We begin with the raw amino-acid sequence, 677 residues long: Methionine--tRNA ligase (677 aa).

The 'HIGH' region motif lies at 15–25 (PYANGPIHIGH). Zn(2+) is bound by residues C146, C149, C159, and C162. A 'KMSKS' region motif is present at residues 332 to 336 (KMSKS). K335 is a binding site for ATP. Residues 576–677 (DFAKVDLRVA…DGAKPGMRIM (102 aa)) form the tRNA-binding domain.

Belongs to the class-I aminoacyl-tRNA synthetase family. MetG type 1 subfamily. In terms of assembly, homodimer. Zn(2+) is required as a cofactor.

Its subcellular location is the cytoplasm. It catalyses the reaction tRNA(Met) + L-methionine + ATP = L-methionyl-tRNA(Met) + AMP + diphosphate. Is required not only for elongation of protein synthesis but also for the initiation of all mRNA translation through initiator tRNA(fMet) aminoacylation. This Idiomarina loihiensis (strain ATCC BAA-735 / DSM 15497 / L2-TR) protein is Methionine--tRNA ligase.